Consider the following 516-residue polypeptide: Glucose-6-phosphate 1-dehydrogenase 5, cytoplasmic (516 aa).

NADP(+)-binding positions include 38 to 45 (GASGDLAK), arginine 73, tyrosine 156, and lysine 183. Residues lysine 183, 213–217 (HYLGK), glutamate 251, and aspartate 270 each bind D-glucose 6-phosphate. Histidine 275 (proton acceptor) is an active-site residue. Lysine 358 is a binding site for NADP(+). Residues lysine 361 and lysine 366 each coordinate D-glucose 6-phosphate. Positions 367, 371, and 395 each coordinate NADP(+). Glutamine 397 is a binding site for D-glucose 6-phosphate. NADP(+)-binding positions include 403–405 (YMK), 423–425 (DLS), arginine 489, and tryptophan 511.

The protein belongs to the glucose-6-phosphate dehydrogenase family. Forms homodimer. In terms of tissue distribution, expressed in leaves and stems.

The protein localises to the cytoplasm. It localises to the cytosol. The enzyme catalyses D-glucose 6-phosphate + NADP(+) = 6-phospho-D-glucono-1,5-lactone + NADPH + H(+). The protein operates within carbohydrate degradation; pentose phosphate pathway; D-ribulose 5-phosphate from D-glucose 6-phosphate (oxidative stage): step 1/3. With respect to regulation, regulated by metabolites. Catalyzes the rate-limiting step of the oxidative pentose-phosphate pathway, which represents a route for the dissimilation of carbohydrates besides glycolysis. The main function of this enzyme is to provide reducing power (NADPH) and pentose phosphates for fatty acid and nucleic acid synthesis which are involved in membrane synthesis and cell division. In Arabidopsis thaliana (Mouse-ear cress), this protein is Glucose-6-phosphate 1-dehydrogenase 5, cytoplasmic.